Here is a 308-residue protein sequence, read N- to C-terminus: Hydroxyacylglutathione hydrolase, mitochondrial (308 aa).

The N-terminal 13 residues, 1 to 13 (MVVGRGLLGRRSL), are a transit peptide targeting the mitochondrion. Zn(2+)-binding residues include histidine 102, histidine 104, aspartate 106, and histidine 107. Residue lysine 116 is modified to N6-acetyllysine. Zn(2+)-binding residues include histidine 158 and aspartate 182. Residues 191-193 (KFY) and 221-223 (HEY) contribute to the substrate site. Histidine 221 provides a ligand contact to Zn(2+). Lysine 229 is subject to N6-acetyllysine; alternate. Lysine 229 is modified (N6-succinyllysine; alternate). 297–300 (RREK) provides a ligand contact to substrate.

This sequence belongs to the metallo-beta-lactamase superfamily. Glyoxalase II family. Monomer. Zn(2+) is required as a cofactor. In terms of tissue distribution, expressed in liver and kidney.

Its subcellular location is the mitochondrion matrix. It localises to the cytoplasm. It catalyses the reaction an S-(2-hydroxyacyl)glutathione + H2O = a 2-hydroxy carboxylate + glutathione + H(+). The catalysed reaction is (R)-S-lactoylglutathione + H2O = (R)-lactate + glutathione + H(+). It participates in secondary metabolite metabolism; methylglyoxal degradation; (R)-lactate from methylglyoxal: step 2/2. Its function is as follows. Thiolesterase that catalyzes the hydrolysis of S-D-lactoyl-glutathione to form glutathione and D-lactic acid. The chain is Hydroxyacylglutathione hydrolase, mitochondrial (HAGH) from Homo sapiens (Human).